The following is a 490-amino-acid chain: Coagulation factor X (490 aa).

The first 20 residues, 1 to 20, serve as a signal peptide directing secretion; it reads MANPLHLVLLGAALAGLLLS. Residues 21 to 40 constitute a propeptide that is removed on maturation; sequence GSSVFISRRAANDVLARTRR. The Gla domain maps to 41 to 85; sequence ANSFLEELKKGNLERECMEENCSYEEALEVFEDREKTNEFWNKYV. E46, E47, E54, E56, E59, and E60 each carry 4-carboxyglutamate. C57 and C62 are disulfide-bonded. N61 is a glycosylation site (N-linked (GlcNAc...) asparagine). 4-carboxyglutamate is present on residues E65, E66, E69, E72, E75, and E79. An EGF-like 1; calcium-binding domain is found at 86 to 122; that stretch reads DGDQCESNPCQNQGTCKDGLGMYTCSCVEGYEGQDCE. Disulfide bonds link C90-C101, C95-C110, C112-C121, C129-C140, C136-C149, C151-C164, C172-C340, C239-C244, C259-C275, C388-C402, and C413-C441. (3R)-3-hydroxyaspartate is present on D103. Residues 125–165 enclose the EGF-like 2 domain; the sequence is TRKLCSLDNGGCDQFCKEEENSVLCSCASGYTLGDNGKSCI. The tract at residues 183–230 is disordered; sequence SPATNSSEGPPEAPGPEQQDDGNLTATENPFNLLDSPEPPPEDDSSSL. Positions 184–232 are cleaved as a propeptide — activation peptide; the sequence is PATNSSEGPPEAPGPEQQDDGNLTATENPFNLLDSPEPPPEDDSSSLVR. 2 N-linked (GlcNAc...) asparagine glycosylation sites follow: N187 and N205. A compositionally biased stretch (polar residues) spans 203 to 212; that stretch reads DGNLTATENP. The Peptidase S1 domain maps to 233–465; the sequence is IVGGQDCRDG…FLKWIEKSMR (233 aa). Residues H274 and D320 each act as charge relay system in the active site. S417 (charge relay system) is an active-site residue.

It belongs to the peptidase S1 family. As to quaternary structure, the two chains are formed from a single-chain precursor by the excision of two Arg residues and are held together by 1 or more disulfide bonds. Forms a heterodimer with SERPINA5. The vitamin K-dependent, enzymatic carboxylation of some glutamate residues allows the modified protein to bind calcium. Post-translationally, N- and O-glycosylated. In terms of processing, proteolytically cleaved and activated by cathepsin CTSG. The activation peptide is cleaved by factor IXa (in the intrinsic pathway), or by factor VIIa (in the extrinsic pathway). The iron and 2-oxoglutarate dependent 3-hydroxylation of aspartate and asparagine is (R) stereospecific within EGF domains.

The protein localises to the secreted. It catalyses the reaction Selective cleavage of Arg-|-Thr and then Arg-|-Ile bonds in prothrombin to form thrombin.. Inhibited by SERPINA5. Factor Xa is a vitamin K-dependent glycoprotein that converts prothrombin to thrombin in the presence of factor Va, calcium and phospholipid during blood clotting. Factor Xa activates pro-inflammatory signaling pathways in a protease-activated receptor (PAR)-dependent manner. The protein is Coagulation factor X (F10) of Oryctolagus cuniculus (Rabbit).